We begin with the raw amino-acid sequence, 392 residues long: Phosphopentomutase (392 aa).

Residues Asp15, Asp287, His292, Asp328, His329, and His340 each coordinate Mn(2+).

It belongs to the phosphopentomutase family. Requires Mn(2+) as cofactor.

Its subcellular location is the cytoplasm. The catalysed reaction is 2-deoxy-alpha-D-ribose 1-phosphate = 2-deoxy-D-ribose 5-phosphate. It catalyses the reaction alpha-D-ribose 1-phosphate = D-ribose 5-phosphate. It functions in the pathway carbohydrate degradation; 2-deoxy-D-ribose 1-phosphate degradation; D-glyceraldehyde 3-phosphate and acetaldehyde from 2-deoxy-alpha-D-ribose 1-phosphate: step 1/2. Functionally, isomerase that catalyzes the conversion of deoxy-ribose 1-phosphate (dRib-1-P) and ribose 1-phosphate (Rib-1-P) to deoxy-ribose 5-phosphate (dRib-5-P) and ribose 5-phosphate (Rib-5-P), respectively. This chain is Phosphopentomutase, found in Syntrophotalea carbinolica (strain DSM 2380 / NBRC 103641 / GraBd1) (Pelobacter carbinolicus).